The chain runs to 224 residues: Synaptonemal complex protein 3 (224 aa).

Coiled-coil stretches lie at residues 63–97 (RVKC…WEER) and 137–171 (HDSM…QSST).

As to quaternary structure, interacts with gras-1. Interacts with brc-1 and brd-1.

Its subcellular location is the chromosome. In terms of biological role, plays a role in early meiotic events; during prophase I contributes to synaptonemal complex (SC) assembly, synapsis and chiasmata formation and stabilization of homologous chromosomes pairing. Required for restricting SC assembly to bridge paired chromosome axes. Required for the timely progression of meiotic crossover recombination. Required for the synapsis checkpoint. This is Synaptonemal complex protein 3 from Caenorhabditis elegans.